The chain runs to 445 residues: UDP-N-acetylmuramoylalanine--D-glutamate ligase (445 aa).

Residue 117-123 (GSNGKTT) coordinates ATP.

This sequence belongs to the MurCDEF family.

The protein resides in the cytoplasm. It carries out the reaction UDP-N-acetyl-alpha-D-muramoyl-L-alanine + D-glutamate + ATP = UDP-N-acetyl-alpha-D-muramoyl-L-alanyl-D-glutamate + ADP + phosphate + H(+). It participates in cell wall biogenesis; peptidoglycan biosynthesis. Cell wall formation. Catalyzes the addition of glutamate to the nucleotide precursor UDP-N-acetylmuramoyl-L-alanine (UMA). The protein is UDP-N-acetylmuramoylalanine--D-glutamate ligase of Neisseria gonorrhoeae (strain NCCP11945).